We begin with the raw amino-acid sequence, 461 residues long: Trigger factor (461 aa).

Residues 169 to 256 form the PPIase FKBP-type domain; the sequence is GDTAVIDFAG…LKDLKIKELP (88 aa). The segment at 432-461 is disordered; sequence PGEAIEPGSGEDAPPEVAAGATEPEAQPNS.

Belongs to the FKBP-type PPIase family. Tig subfamily.

It localises to the cytoplasm. The catalysed reaction is [protein]-peptidylproline (omega=180) = [protein]-peptidylproline (omega=0). Involved in protein export. Acts as a chaperone by maintaining the newly synthesized protein in an open conformation. Functions as a peptidyl-prolyl cis-trans isomerase. The sequence is that of Trigger factor from Gloeobacter violaceus (strain ATCC 29082 / PCC 7421).